The following is a 439-amino-acid chain: Hydroxyornithine transacylase SID3 (439 aa).

A PTS1-type peroxisomal targeting signal motif is present at residues 437–439 (SKL).

The protein belongs to the lysine N-acyltransferase mbtK family.

It is found in the peroxisome. Its pathway is siderophore biosynthesis. In terms of biological role, hydroxyornithine transacylase; part of the gene cluster that mediates the biosynthesis of hydroxamate-containing siderophores that play a critical role in virulence via intracellular iron acquisition during macrophage infection. The protein is Hydroxyornithine transacylase SID3 of Ajellomyces capsulatus (Darling's disease fungus).